The sequence spans 119 residues: Large ribosomal subunit protein uL18 (119 aa).

This sequence belongs to the universal ribosomal protein uL18 family. In terms of assembly, part of the 50S ribosomal subunit; part of the 5S rRNA/L5/L18/L25 subcomplex. Contacts the 5S and 23S rRNAs.

Its function is as follows. This is one of the proteins that bind and probably mediate the attachment of the 5S RNA into the large ribosomal subunit, where it forms part of the central protuberance. This is Large ribosomal subunit protein uL18 from Cupriavidus metallidurans (strain ATCC 43123 / DSM 2839 / NBRC 102507 / CH34) (Ralstonia metallidurans).